Here is a 532-residue protein sequence, read N- to C-terminus: Exopolysaccharide phosphotransferase CpsY (532 aa).

The protein belongs to the stealth family.

In Mycobacterium bovis (strain ATCC BAA-935 / AF2122/97), this protein is Exopolysaccharide phosphotransferase CpsY (cpsY).